The sequence spans 1600 residues: Eukaryotic translation initiation factor 4 gamma 1 (1600 aa).

Positions 1 to 88 (MNKAPQPTGP…ARPGPAPHVY (88 aa)) are disordered. The segment covering 7 to 24 (PTGPPPARSPGLPQPAFP) has biased composition (pro residues). Ser15 is subject to Phosphoserine. A compositionally biased stretch (polar residues) spans 34–48 (STPQATQMNTPSQPR). Low complexity predominate over residues 60 to 79 (PSRAQPPSSAASRVQSAAPA). Arg80 and Arg117 each carry omega-N-methylarginine. Disordered regions lie at residues 173-230 (NQPP…NGES), 243-326 (SQGA…LSPE), 366-501 (ETHE…QLSQ), 507-526 (AATQ…KELN), and 541-606 (VDPA…DQWK). The segment at 179 to 207 (APKRERKTIRIRDPNQGGKDITEEIMSGA) is PABPC1-binding. Polar residues predominate over residues 208-220 (RTASTPTPPQTGG). Residue Thr214 is modified to Phosphothreonine. Phosphoserine is present on Ser230. Residues 269 to 280 (SPSPTPSPPPIL) are compositionally biased toward pro residues. A Phosphoserine modification is found at Ser324. A compositionally biased stretch (low complexity) spans 438-449 (KVSSAALASILS). Over residues 463 to 479 (QEEEMEEDDDDEEGGEA) the composition is skewed to acidic residues. Residues 551–562 (QPPTGSNPSPES) show a composition bias toward polar residues. Basic and acidic residues-rich tracts occupy residues 578 to 587 (WDSKEDKIHN) and 596 to 606 (QKYEYKSDQWK). At Lys606 the chain carries N6-acetyllysine. The segment at 611 to 622 (EEKKRYDREFLL) is EIF4E-binding. Thr651 is subject to Phosphothreonine. Disordered regions lie at residues 667-719 (GPDF…TRKI) and 734-760 (AEKA…DGSK). Residues 686-1089 (GPPRGGPGGE…GSIDSNNQLF (404 aa)) are eIF3/EIF4A-binding. An omega-N-methylarginine mark is found at Arg689 and Arg698. A compositionally biased stretch (low complexity) spans 697-707 (PRGPAGLGPRR). The span at 745–760 (TAADKDRGEEDADGSK) shows a compositional bias: basic and acidic residues. The region spanning 765–993 (FRRVRSILNK…QDVLDLRQSN (229 aa)) is the MIF4G domain. Disordered regions lie at residues 1029–1117 (AKGS…SEAT) and 1129–1238 (QQTL…AALS). Ser1032 is subject to Phosphoserine. Omega-N-methylarginine occurs at positions 1036 and 1046. Phosphoserine is present on residues Ser1081 and Ser1096. The residue at position 1099 (Lys1099) is an N6-acetyllysine. A phosphoserine mark is found at Ser1147 and Ser1149. A compositionally biased stretch (basic and acidic residues) spans 1148–1180 (LSRERGEKAGDRGDRLERSERGGDRGDRLDRAR). A Phosphoserine; by PKC/PRKCA modification is found at Ser1187. Residues 1188–1225 (FSKEVEERSRERPSQPEGLRKAASLTEDRGRDPVKREA) are compositionally biased toward basic and acidic residues. 3 positions are modified to phosphoserine: Ser1189, Ser1196, and Ser1211. Thr1213 carries the post-translational modification Phosphothreonine. Phosphoserine occurs at positions 1231 and 1238. The MI domain occupies 1241-1363 (EVEKKSKAII…PMGELFREIT (123 aa)). Positions 1429-1599 (ESEAPGQRTL…REAEDEESDH (171 aa)) constitute a W2 domain. Residues 1450–1600 (LLKDGGSNQR…EAEDEESDHN (151 aa)) are EIF4A-binding. Positions 1585–1600 (FFNWLREAEDEESDHN) are necessary but not sufficient for MKNK1-binding. Ser1597 is subject to Phosphoserine.

Belongs to the eukaryotic initiation factor 4G family. EIF4F is a multi-subunit complex, the composition of which varies with external and internal environmental conditions. It is composed of at least EIF4A, EIF4E (cap-binding) and EIF4G1/EIF4G3. Interacts with eIF3 complex, mutually exclusive with EIF4A1 or EIF4A2, EIF4E and through its N-terminus with PABPC1. Interacts with EIF4E or with EIF1 (mutually exclusive) through a common binding site. Interacts through its C-terminus with the serine/threonine kinases MKNK1, and with MKNK2. Appears to act as a scaffold protein, holding these enzymes in place to phosphorylate EIF4E. Non-phosphorylated EIF4EBP1 competes with EIF4G1/EIF4G3 to interact with EIF4E; insulin stimulated MAP-kinase (MAPK1 and MAPK3) phosphorylation of EIF4EBP1 causes dissociation of the complex allowing EIF4G1/EIF4G3 to bind and consequent initiation of translation. EIF4G1/EIF4G3 interacts with PABPC1 to bring about circularization of the mRNA. Interacts with EIF4E3. Interacts with CIRBP and MIF4GD. Interacts with RBM4. Interacts with HNRNPD/AUF1; the interaction requires RNA. Interacts with DDX3X; the interaction requires RNA. Interacts with DAZAP2. In terms of assembly, (Microbial infection) Interacts with murine norovirus viral genome-linked protein (via C-terminus); this interaction plays a role in translation of viral proteins. In terms of processing, phosphorylated at multiple sites in vivo. Phosphorylation at Ser-1187 by PRKCA induces binding to MKNK1.

Its subcellular location is the cytoplasm. It localises to the nucleus. The protein localises to the stress granule. Functionally, component of the protein complex eIF4F, which is involved in the recognition of the mRNA cap, ATP-dependent unwinding of 5'-terminal secondary structure and recruitment of mRNA to the ribosome. Exists in two complexes, either with EIF1 or with EIF4E (mutually exclusive). Together with EIF1, is required for leaky scanning, in particular for avoiding cap-proximal start codon. Together with EIF4E, antagonizes the scanning promoted by EIF1-EIF4G1 and locates the start codon (through a TISU element) without scanning. As a member of the eIF4F complex, required for endoplasmic reticulum stress-induced ATF4 mRNA translation. The sequence is that of Eukaryotic translation initiation factor 4 gamma 1 (Eif4g1) from Mus musculus (Mouse).